Reading from the N-terminus, the 518-residue chain is Glutamate--cysteine ligase (518 aa).

It belongs to the glutamate--cysteine ligase type 1 family. Type 1 subfamily.

The catalysed reaction is L-cysteine + L-glutamate + ATP = gamma-L-glutamyl-L-cysteine + ADP + phosphate + H(+). The protein operates within sulfur metabolism; glutathione biosynthesis; glutathione from L-cysteine and L-glutamate: step 1/2. This is Glutamate--cysteine ligase from Shigella boydii serotype 18 (strain CDC 3083-94 / BS512).